The primary structure comprises 815 residues: MSFLRPSIWRSSPMQMVQLFVQIEAAHDTVDELGKLGLIQFLDDNEHVNLFQRNFVNEVKRCDDMEKKLKFFEDQVKKEPKLQKLLPDNMLSVVDDDSQMDELEGRFDELESELKQVNANQETLQRNYNELIQLRHVLTKDSVFFQENPNLIEGEGHEHSARSPLLAEDQHVSEVAKQGVKLGFITGVMNTDKMPQFQRSLWRTTRGNNYVKDARIEEEIIDPQTGEETAKTVFIVFFQGERLQQKIKKICESFGANIYDCPDNSFERSNLLQKVTVRITDLYEVLQRSKDHKRQTLAGIVPRLYSWKKKVLLEKSIYHTMNLFDYDVGRKCLIAKGWTPKDKIEEIQLALRTATTRSGALVPSVLSIIKTEGSPPTHFETNKYTSSFQEIVNAYGIAHYREVNPAVLTIVTFPFLFGVMFGDVGHGALLLLSALGLISLEKKLAGKKLNELIQMPFDGRYVLFLMSLFSIYVGFIYNECFSIPMNIFGSQYNLNSTTGLYTYQHTDRVYPVGVDPLWKGAPNELVYYNSFKMKLSIIFGVVQMSVGICFSLLNYLNQKGPIKIVNILTQFVPQMIFLWSIFGYMSVLIILKWVVPYRSFEVDKVDPPFILPTIIAMFLSPGGTPDVVFFSGQGAVQTALLFLALISIPVMLVIKPLFMKRFHFQEVERKKLGHHEEEHDDEALYTGHHGEEFEMGEVFVHQVIHTIEFVLGAVSNTASYLRLWALSLAHSELSSVFWERILIGQVERGNPFLAFVGFGAWLGASVAVLLLMESLSAFLHALRLHWVEFQNKFYIGDGVRFIPYSATRILSEDDE.

Topologically, residues 1–402 are cytoplasmic; it reads MSFLRPSIWR…NAYGIAHYRE (402 aa). Residues 403 to 421 traverse the membrane as a helical segment; it reads VNPAVLTIVTFPFLFGVMF. Residues 422–423 are Vacuolar-facing; the sequence is GD. The helical transmembrane segment at 424–440 threads the bilayer; sequence VGHGALLLLSALGLISL. The Cytoplasmic portion of the chain corresponds to 441–454; it reads EKKLAGKKLNELIQ. A helical transmembrane segment spans residues 455–484; that stretch reads MPFDGRYVLFLMSLFSIYVGFIYNECFSIP. Residues 485–530 lie on the Vacuolar side of the membrane; it reads MNIFGSQYNLNSTTGLYTYQHTDRVYPVGVDPLWKGAPNELVYYNS. Residues 531–550 traverse the membrane as a helical segment; that stretch reads FKMKLSIIFGVVQMSVGICF. Residues 551–571 are Cytoplasmic-facing; it reads SLLNYLNQKGPIKIVNILTQF. A helical transmembrane segment spans residues 572–592; sequence VPQMIFLWSIFGYMSVLIILK. The Vacuolar segment spans residues 593 to 639; it reads WVVPYRSFEVDKVDPPFILPTIIAMFLSPGGTPDVVFFSGQGAVQTA. A helical membrane pass occupies residues 640–659; sequence LLFLALISIPVMLVIKPLFM. Topologically, residues 660–706 are cytoplasmic; the sequence is KRFHFQEVERKKLGHHEEEHDDEALYTGHHGEEFEMGEVFVHQVIHT. Residues 707 to 731 form a helical membrane-spanning segment; that stretch reads IEFVLGAVSNTASYLRLWALSLAHS. The Vacuolar segment spans residues 732 to 749; it reads ELSSVFWERILIGQVERG. The chain crosses the membrane as a helical span at residues 750 to 788; that stretch reads NPFLAFVGFGAWLGASVAVLLLMESLSAFLHALRLHWVE. Residues 789-815 are Cytoplasmic-facing; the sequence is FQNKFYIGDGVRFIPYSATRILSEDDE.

It belongs to the V-ATPase 116 kDa subunit family. In terms of assembly, the V-ATPase is a heteromultimeric enzyme.

The protein resides in the cytoplasmic vesicle membrane. The protein localises to the endosome membrane. It is found in the vacuole membrane. It localises to the lysosome membrane. Its function is as follows. Essential component of the vacuolar proton pump (V-ATPase), a multimeric enzyme that catalyzes the translocation of protons across the membranes. Required for assembly and activity of the V-ATPase. Required in both the contractile vacuole system and the endosomal/lysosomal system. Also required for cytosolic pH regulation. The sequence is that of Vacuolar proton translocating ATPase 100 kDa subunit (vatM) from Dictyostelium discoideum (Social amoeba).